Consider the following 435-residue polypeptide: GTPase Der (435 aa).

2 EngA-type G domains span residues 4–167 (GIVA…PSHE) and 175–350 (TRVS…TALD). Residues 10-17 (GRPNVGKS), 57-61 (DTGGI), 119-122 (NKYD), 181-188 (GRPNVGKS), 228-232 (DTAGI), and 293-296 (NKWD) each bind GTP. The KH-like domain maps to 351 to 435 (KKIKTSVFNE…PMSIIFRERK (85 aa)).

Belongs to the TRAFAC class TrmE-Era-EngA-EngB-Septin-like GTPase superfamily. EngA (Der) GTPase family. In terms of assembly, associates with the 50S ribosomal subunit.

Functionally, GTPase that plays an essential role in the late steps of ribosome biogenesis. In Mesoplasma florum (strain ATCC 33453 / NBRC 100688 / NCTC 11704 / L1) (Acholeplasma florum), this protein is GTPase Der.